Here is a 90-residue protein sequence, read N- to C-terminus: Phenol 2-monooxygenase, stimulatory component DmpM (90 aa).

It belongs to the TmoD/XamoD family. Active as a monomer. Formation of dimers inactivates the protein. The multicomponent enzyme phenol hydroxylase is formed by DmpL (P1 component), DmpM (P2 component), DmpN (P3 component), DmpO (P4 component) and DmpP (P5 component).

The enzyme catalyses phenol + NADH + O2 + H(+) = catechol + NAD(+) + H2O. It participates in aromatic compound metabolism; phenol degradation. Its function is as follows. Part of a multicomponent enzyme which catalyzes the degradation of phenol and some of its methylated derivatives. DmpM is a regulatory subunit that stimulates the phenol hydroxylase activity of the complex. The steady-state rate of phenol hydroxylase turnover is dependent on the DmpM concentration, with a maximum observed rate at about 1.5 DmpM per oxygenase monomer. Higher concentrations of DmpM inhibit phenol hydroxylase activity. May act by altering the redox potential of the oxygenase. Required for growth on phenol and for in vitro phenol hydroxylase activity. The chain is Phenol 2-monooxygenase, stimulatory component DmpM from Pseudomonas sp. (strain CF600).